We begin with the raw amino-acid sequence, 297 residues long: Calponin-1 (297 aa).

The region spanning 28–131 (HQREQELREW…STLLALASMA (104 aa)) is the Calponin-homology (CH) domain. Phosphoserine is present on S48. Calponin-like repeat units lie at residues 164–189 (IGLQ…RHLY), 204–229 (ISLQ…RQIF), and 243–268 (VSLQ…RQVY). Position 170 is a phosphothreonine; by ROCK2 (T170). Phosphoserine; by ROCK2 is present on S175. Phosphothreonine; by ROCK2 is present on residues T180 and T184. T259 carries the post-translational modification Phosphothreonine; by ROCK2.

Belongs to the calponin family. In terms of assembly, part of cGMP kinase signaling complex at least composed of ACTA2/alpha-actin, CNN1/calponin H1, PLN/phospholamban, PRKG1 and ITPR1. As to expression, smooth muscle, and tissues containing significant amounts of smooth muscle.

Its function is as follows. Thin filament-associated protein that is implicated in the regulation and modulation of smooth muscle contraction. It is capable of binding to actin, calmodulin and tropomyosin. The interaction of calponin with actin inhibits the actomyosin Mg-ATPase activity. In Rattus norvegicus (Rat), this protein is Calponin-1 (Cnn1).